A 107-amino-acid chain; its full sequence is Frataxin (107 aa).

It belongs to the frataxin family. Monomer.

It localises to the cytoplasm. Functionally, promotes the assembly and repair of iron-sulfur clusters by delivering Fe(2+) to proteins involved in these pathways. The protein is Frataxin (YFH1) of Trachipleistophora hominis (Microsporidian parasite).